The primary structure comprises 419 residues: UDP-N-acetylglucosamine 1-carboxyvinyltransferase (419 aa).

22 to 23 lines the phosphoenolpyruvate pocket; that stretch reads KN. Residue Arg-91 coordinates UDP-N-acetyl-alpha-D-glucosamine. Residue Cys-115 is the Proton donor of the active site. At Cys-115 the chain carries 2-(S-cysteinyl)pyruvic acid O-phosphothioketal. Residues 120–124, 160–163, Asp-305, and Ile-327 each bind UDP-N-acetyl-alpha-D-glucosamine; these read RPVDL and KVSV.

Belongs to the EPSP synthase family. MurA subfamily.

The protein resides in the cytoplasm. The catalysed reaction is phosphoenolpyruvate + UDP-N-acetyl-alpha-D-glucosamine = UDP-N-acetyl-3-O-(1-carboxyvinyl)-alpha-D-glucosamine + phosphate. It participates in cell wall biogenesis; peptidoglycan biosynthesis. Its function is as follows. Cell wall formation. Adds enolpyruvyl to UDP-N-acetylglucosamine. In Citrobacter koseri (strain ATCC BAA-895 / CDC 4225-83 / SGSC4696), this protein is UDP-N-acetylglucosamine 1-carboxyvinyltransferase.